A 960-amino-acid polypeptide reads, in one-letter code: Protein mono-ADP-ribosyltransferase PARP10 (960 aa).

The residue at position 103 (E103) is an ADP-ribosyl glutamic acid. Polar residues predominate over residues 325 to 341 (SMGSTSPVDPVESSTEL). Positions 325–346 (SMGSTSPVDPVESSTELPEQVG) are disordered. Phosphoserine occurs at positions 381 and 388. The disordered stretch occupies residues 553-576 (SPHGGEDRVPLEMEKEKPGGPGET). The span at 555-570 (HGGEDRVPLEMEKEKP) shows a compositional bias: basic and acidic residues. A Ubiquitin-interacting motif is present at residues 604-621 (LEEEATLQLAIHRSLESQ). S617 bears the Phosphoserine mark. Residues 649–856 (DEDTGGEAQL…CAHGFNRSFC (208 aa)) are myc binding. The 206-residue stretch at 755–960 (PNLSEQGLKE…TCKNILPGTP (206 aa)) folds into the PARP catalytic domain. The short motif at 780–787 (QDVVRAFY) is the PIP-box element. ADP-ribosyl glutamic acid is present on E831.

The protein belongs to the ARTD/PARP family. As to quaternary structure, interacts with MYC. Interacts with PARP14. Interacts (via-PIP box and ubiquitin-interacting motifs) with PCNA. Post-translationally, stimulated through its phosphorylation by CDK2. Acquires CDK-dependent phosphorylation through late-G1 to S phase, and from prometaphase to cytokinesis in the nucleolar organizing regions. Phosphorylation is suppressed in growth-arrested cells. In terms of processing, auto-mono-ADP-ribosylated on glutamate and lysine residues.

The protein localises to the cytoplasm. The protein resides in the nucleus. The catalysed reaction is L-lysyl-[protein] + NAD(+) = N(6)-(ADP-D-ribosyl)-L-lysyl-[protein] + nicotinamide + H(+). The enzyme catalyses L-aspartyl-[protein] + NAD(+) = 4-O-(ADP-D-ribosyl)-L-aspartyl-[protein] + nicotinamide. It catalyses the reaction L-glutamyl-[protein] + NAD(+) = 5-O-(ADP-D-ribosyl)-L-glutamyl-[protein] + nicotinamide. In terms of biological role, ADP-ribosyltransferase that mediates mono-ADP-ribosylation of glutamate and aspartate residues on target proteins. In contrast to PARP1 and PARP2, it is not able to mediate poly-ADP-ribosylation. Catalyzes mono-ADP-ribosylation of GSK3B, leading to negatively regulate GSK3B kinase activity. Involved in translesion DNA synthesis in response to DNA damage via its interaction with PCNA. This Mus musculus (Mouse) protein is Protein mono-ADP-ribosyltransferase PARP10.